The chain runs to 160 residues: MFHITVLAVGRLKEKYLTEGAAEYLKRLSAYAKISVVEVEDGSLPENPAAAGGEKVKEKEGERLLGRLRPGTFLIALDVRGKMHSSEEMAEILNRLALSGRSDITFAIGGALGLSEKVLERAAMRLSFSRMTFPHQLVRLILLEQLYRWFKIARGEPYHY.

Residues Leu-77, Gly-109, and 128–133 (FSRMTF) contribute to the S-adenosyl-L-methionine site.

It belongs to the RNA methyltransferase RlmH family. In terms of assembly, homodimer.

Its subcellular location is the cytoplasm. It carries out the reaction pseudouridine(1915) in 23S rRNA + S-adenosyl-L-methionine = N(3)-methylpseudouridine(1915) in 23S rRNA + S-adenosyl-L-homocysteine + H(+). In terms of biological role, specifically methylates the pseudouridine at position 1915 (m3Psi1915) in 23S rRNA. In Pelotomaculum thermopropionicum (strain DSM 13744 / JCM 10971 / SI), this protein is Ribosomal RNA large subunit methyltransferase H.